Here is a 318-residue protein sequence, read N- to C-terminus: Glutathione synthetase (318 aa).

The ATP-grasp domain occupies 128 to 313 (KLAILNFSRF…VAAMFADAVA (186 aa)). 154–210 (LKEHGDIIIKPLDGMGGMGIFRLTEKDPNIGSILETLMQLDSRTIMAQRYIPEIVHG) contacts ATP. Mg(2+)-binding residues include E284 and N286.

It belongs to the prokaryotic GSH synthase family. The cofactor is Mg(2+). Mn(2+) serves as cofactor.

It catalyses the reaction gamma-L-glutamyl-L-cysteine + glycine + ATP = glutathione + ADP + phosphate + H(+). Its pathway is sulfur metabolism; glutathione biosynthesis; glutathione from L-cysteine and L-glutamate: step 2/2. The polypeptide is Glutathione synthetase (Neisseria meningitidis serogroup A / serotype 4A (strain DSM 15465 / Z2491)).